The primary structure comprises 508 residues: NADH-quinone oxidoreductase subunit N 1 (508 aa).

13 consecutive transmembrane segments (helical) span residues 2-22 (ILGP…GALL), 47-67 (ALGT…VGFV), 87-107 (FTLF…LLAG), 126-146 (FSTV…LFLG), 175-195 (FLLG…IYGA), 220-240 (ALLL…VSAV), 260-280 (FMAV…LLGA), 291-311 (AGWP…ANLI), 321-341 (MLAY…AATV), 351-371 (VMFY…TLIL), 396-416 (ALAF…AGFF), 431-453 (YTLS…RVLV), and 479-499 (LVVS…SLGI).

It belongs to the complex I subunit 2 family. NDH-1 is composed of 14 different subunits. Subunits NuoA, H, J, K, L, M, N constitute the membrane sector of the complex.

It is found in the cell inner membrane. It catalyses the reaction a quinone + NADH + 5 H(+)(in) = a quinol + NAD(+) + 4 H(+)(out). NDH-1 shuttles electrons from NADH, via FMN and iron-sulfur (Fe-S) centers, to quinones in the respiratory chain. The immediate electron acceptor for the enzyme in this species is believed to be ubiquinone. Couples the redox reaction to proton translocation (for every two electrons transferred, four hydrogen ions are translocated across the cytoplasmic membrane), and thus conserves the redox energy in a proton gradient. The protein is NADH-quinone oxidoreductase subunit N 1 of Sorangium cellulosum (strain So ce56) (Polyangium cellulosum (strain So ce56)).